Consider the following 96-residue polypeptide: Plasminogen-like protein B (96 aa).

The N-terminal stretch at 1-19 (MEHKEVVLLLLLFLKSGQG) is a signal peptide. Residues 20-96 (EPLDDYVNTQ…RMRDAVLFEK (77 aa)) enclose the PAN domain. Disulfide bonds link cysteine 49/cysteine 73 and cysteine 53/cysteine 61.

It is found in the secreted. Functionally, may bind noncovalently to lysine binding sites present in the kringle structures of plasminogen. This may interfere with the binding of fibrin or alpha-2-antiplasmin to plasminogen and may result in the localization of activity at sites necessary for extracellular matrix destruction. The protein is Plasminogen-like protein B (PLGLB1) of Homo sapiens (Human).